The primary structure comprises 692 residues: MARKTPIEKVRNIGIAAHIDAGKTTTTERILYYTGISHKIGEVHEGAATMDWMDQEKERGITITSAATTCFWKDHQINIIDTPGHVDFTIEVERSMRVLDGAVAVFCAVGGVQPQSETVWRQANKYHVPRIVFVNKMDRIGADFYNVENQIRERLKANPVPIQIPIGAEDNFRGVVDLVEMKGIVWDDETMGAKYEVIDIPEELREKAEEYREKLVEAVAETDEELLDKYLGGEELTTEEIKKGIKKGTLDMTITPMLCGSAFKNKGVQTLLDAVVDYLPAPTEVSWIKGIDPKTGEEVSVESTDNGPFAALAFKIMTDPFVGQLSFIRVYRGQIASGSYVLNSTKEKKERVGRLLKMHANKREEIKELPAGEIGAVVGLKYTLTGDTLCDESHPVILEKMEFPEPVISVAVEPKTKADQEKMATALAKLAEEDPSFRVHTDEETGQTIISGMGELHLEIIVDRMKREFKVDAEVGQPQVAYRETIKAPVDQEYKYAKQSGGRGQYGHVFIKLEPQEPGKGYEFVNNITGGVIPKEYIPAVDKGIQEAMQNGVLAGYPVVDIKATLYDGSYHDVDSSEMAFKIAGSMAFKEAAKKANPILLEPIMKVEVEVPEEYMGDVIGDINRRRGQVQSMEDRAGNKIVTAMVPLAEMFGYSTDLRSFTQGRGTYSMEFDHYEEVPKNVADEIIKKRNG.

Positions 8 to 283 (EKVRNIGIAA…AVVDYLPAPT (276 aa)) constitute a tr-type G domain. GTP-binding positions include 17 to 24 (AHIDAGKT), 81 to 85 (DTPGH), and 135 to 138 (NKMD).

This sequence belongs to the TRAFAC class translation factor GTPase superfamily. Classic translation factor GTPase family. EF-G/EF-2 subfamily.

It is found in the cytoplasm. Catalyzes the GTP-dependent ribosomal translocation step during translation elongation. During this step, the ribosome changes from the pre-translocational (PRE) to the post-translocational (POST) state as the newly formed A-site-bound peptidyl-tRNA and P-site-bound deacylated tRNA move to the P and E sites, respectively. Catalyzes the coordinated movement of the two tRNA molecules, the mRNA and conformational changes in the ribosome. The polypeptide is Elongation factor G (Nitratiruptor sp. (strain SB155-2)).